A 227-amino-acid chain; its full sequence is Cytochrome c oxidase subunit 2 (227 aa).

Topologically, residues 1–14 (MAYPLQLGFQDATS) are mitochondrial intermembrane. The helical transmembrane segment at 15 to 45 (PVMEELLHFHDHTLMIIFLISSLVLYIIMLM) threads the bilayer. The Mitochondrial matrix segment spans residues 46–59 (LTTKLVHTNMMNVQ). Residues 60-87 (EMEMIWTILPAIILILIALPSLHTLYMM) traverse the membrane as a helical segment. The Mitochondrial intermembrane segment spans residues 88–227 (DEINNPLLTI…YFESWSASLA (140 aa)). Residues His161, Cys196, Glu198, Cys200, His204, and Met207 each coordinate Cu cation. Position 198 (Glu198) interacts with Mg(2+). Tyr218 carries the phosphotyrosine modification.

This sequence belongs to the cytochrome c oxidase subunit 2 family. Component of the cytochrome c oxidase (complex IV, CIV), a multisubunit enzyme composed of 14 subunits. The complex is composed of a catalytic core of 3 subunits MT-CO1, MT-CO2 and MT-CO3, encoded in the mitochondrial DNA, and 11 supernumerary subunits COX4I, COX5A, COX5B, COX6A, COX6B, COX6C, COX7A, COX7B, COX7C, COX8 and NDUFA4, which are encoded in the nuclear genome. The complex exists as a monomer or a dimer and forms supercomplexes (SCs) in the inner mitochondrial membrane with NADH-ubiquinone oxidoreductase (complex I, CI) and ubiquinol-cytochrome c oxidoreductase (cytochrome b-c1 complex, complex III, CIII), resulting in different assemblies (supercomplex SCI(1)III(2)IV(1) and megacomplex MCI(2)III(2)IV(2)). Found in a complex with TMEM177, COA6, COX18, COX20, SCO1 and SCO2. Interacts with TMEM177 in a COX20-dependent manner. Interacts with COX20. Interacts with COX16. The cofactor is Cu cation.

It localises to the mitochondrion inner membrane. The enzyme catalyses 4 Fe(II)-[cytochrome c] + O2 + 8 H(+)(in) = 4 Fe(III)-[cytochrome c] + 2 H2O + 4 H(+)(out). Functionally, component of the cytochrome c oxidase, the last enzyme in the mitochondrial electron transport chain which drives oxidative phosphorylation. The respiratory chain contains 3 multisubunit complexes succinate dehydrogenase (complex II, CII), ubiquinol-cytochrome c oxidoreductase (cytochrome b-c1 complex, complex III, CIII) and cytochrome c oxidase (complex IV, CIV), that cooperate to transfer electrons derived from NADH and succinate to molecular oxygen, creating an electrochemical gradient over the inner membrane that drives transmembrane transport and the ATP synthase. Cytochrome c oxidase is the component of the respiratory chain that catalyzes the reduction of oxygen to water. Electrons originating from reduced cytochrome c in the intermembrane space (IMS) are transferred via the dinuclear copper A center (CU(A)) of subunit 2 and heme A of subunit 1 to the active site in subunit 1, a binuclear center (BNC) formed by heme A3 and copper B (CU(B)). The BNC reduces molecular oxygen to 2 water molecules using 4 electrons from cytochrome c in the IMS and 4 protons from the mitochondrial matrix. The chain is Cytochrome c oxidase subunit 2 (MT-CO2) from Mammuthus primigenius (Siberian woolly mammoth).